A 466-amino-acid chain; its full sequence is ATP synthase subunit beta (466 aa).

148 to 155 (GGAGVGKT) provides a ligand contact to ATP.

It belongs to the ATPase alpha/beta chains family. In terms of assembly, F-type ATPases have 2 components, CF(1) - the catalytic core - and CF(0) - the membrane proton channel. CF(1) has five subunits: alpha(3), beta(3), gamma(1), delta(1), epsilon(1). CF(0) has three main subunits: a(1), b(2) and c(9-12). The alpha and beta chains form an alternating ring which encloses part of the gamma chain. CF(1) is attached to CF(0) by a central stalk formed by the gamma and epsilon chains, while a peripheral stalk is formed by the delta and b chains.

The protein resides in the cell inner membrane. It carries out the reaction ATP + H2O + 4 H(+)(in) = ADP + phosphate + 5 H(+)(out). In terms of biological role, produces ATP from ADP in the presence of a proton gradient across the membrane. The catalytic sites are hosted primarily by the beta subunits. This is ATP synthase subunit beta from Xylella fastidiosa (strain 9a5c).